Here is a 529-residue protein sequence, read N- to C-terminus: Listeriolysin O (529 aa).

An N-terminal signal peptide occupies residues 1–24 (MKKIMLVFITLILISLPIAQQTEA). The disordered stretch occupies residues 35 to 54 (SISSMAPPASPPASPKTPIE). 4 beta stranded membrane passes run 214–227 (ESQL…AFKA), 234–243 (VNFGAISEGK), 312–321 (STKVKAAFDA), and 329–341 (SGDV…IKNS). The Conserved undecapeptide motif lies at 483–493 (ECTGLAWEWWR). The Cholesterol binding motif lies at 515–516 (TL).

The protein belongs to the cholesterol-dependent cytolysin family. As to quaternary structure, homooligomeric pore complex of 35 to 50 subunits; when inserted in the host membrane.

The protein resides in the secreted. Its subcellular location is the host membrane. The protein localises to the host cell membrane. Its activity is regulated as follows. Activity of listeriolysin O is regulated on multiple levels. It should be high in the phagosome, thereby allowing escape of the bacteria from the phagosomal compartment. Then, once inside the host cytosol, the activity must be controlled to prevent lysis of the host plasma membrane and loss of the intracellular environment. Functionally, a cholesterol-dependent toxin that causes cytolysis by forming pores in cholesterol containing host membranes. After binding to target membranes, the protein undergoes a major conformation change, leading to its insertion in the host membrane and formation of an oligomeric pore complex. Cholesterol is required for binding to host membranes, membrane insertion and pore formation; cholesterol binding is mediated by a Thr-Leu pair in the C-terminus. Acts as a major virulence factor required for the escape of bacteria from phagosomal vacuoles and entry into the host cytosol. Can be reversibly inactivated by oxidation. This chain is Listeriolysin O (hly), found in Listeria monocytogenes serotype 4a (strain HCC23).